The chain runs to 130 residues: Small ribosomal subunit protein uS8 (130 aa).

This sequence belongs to the universal ribosomal protein uS8 family. As to quaternary structure, part of the 30S ribosomal subunit. Contacts proteins S5 and S12.

Its function is as follows. One of the primary rRNA binding proteins, it binds directly to 16S rRNA central domain where it helps coordinate assembly of the platform of the 30S subunit. This chain is Small ribosomal subunit protein uS8, found in Glaesserella parasuis serovar 5 (strain SH0165) (Haemophilus parasuis).